Here is a 311-residue protein sequence, read N- to C-terminus: 4-hydroxyproline 2-epimerase (311 aa).

Cys-89 functions as the Proton acceptor in the catalytic mechanism. Residues 90-91 (GH), His-209, and Asp-233 contribute to the substrate site. The active-site Proton donor is the Cys-237. 238–239 (GT) is a binding site for substrate.

This sequence belongs to the proline racemase family.

It carries out the reaction trans-4-hydroxy-L-proline = cis-4-hydroxy-D-proline. Functionally, catalyzes the epimerization of trans-4-hydroxy-L-proline (t4LHyp) to cis-4-hydroxy-D-proline (c4DHyp). Is likely involved in a degradation pathway that converts t4LHyp to alpha-ketoglutarate. Displays no proline racemase activity. The sequence is that of 4-hydroxyproline 2-epimerase from Burkholderia ambifaria (strain ATCC BAA-244 / DSM 16087 / CCUG 44356 / LMG 19182 / AMMD) (Burkholderia cepacia (strain AMMD)).